A 266-amino-acid polypeptide reads, in one-letter code: Undecaprenyl-diphosphatase (266 aa).

8 consecutive transmembrane segments (helical) span residues 1-21 (MDTL…FLPI), 39-59 (QGLS…VIYF), 83-103 (SKLA…GFTA), 111-131 (LRGP…LWFA), 149-169 (ALLI…RSGI), 183-203 (AAAR…ALLM), 218-238 (ALAL…YFFL), and 246-266 (MTPF…FIYL).

It belongs to the UppP family.

Its subcellular location is the cell inner membrane. It carries out the reaction di-trans,octa-cis-undecaprenyl diphosphate + H2O = di-trans,octa-cis-undecaprenyl phosphate + phosphate + H(+). In terms of biological role, catalyzes the dephosphorylation of undecaprenyl diphosphate (UPP). Confers resistance to bacitracin. The protein is Undecaprenyl-diphosphatase of Shewanella amazonensis (strain ATCC BAA-1098 / SB2B).